Here is an 89-residue protein sequence, read N- to C-terminus: MARSLKKGPFVDHHLVAKVAAAAGSKRPIKTWSRRSMILPDMVGVTIAVHNGKNHIPVLVNENMVGHKLGEFAITRTFKGHGGDKKSGK.

This sequence belongs to the universal ribosomal protein uS19 family.

Its function is as follows. Protein S19 forms a complex with S13 that binds strongly to the 16S ribosomal RNA. The sequence is that of Small ribosomal subunit protein uS19 from Stenotrophomonas maltophilia (strain R551-3).